Consider the following 56-residue polypeptide: Large ribosomal subunit protein bL33 (56 aa).

This sequence belongs to the bacterial ribosomal protein bL33 family.

The polypeptide is Large ribosomal subunit protein bL33 (Rickettsia bellii (strain OSU 85-389)).